A 187-amino-acid chain; its full sequence is Signal peptidase I U (187 aa).

The Cytoplasmic portion of the chain corresponds to Met1 to Thr16. Residues Ile17–Tyr37 traverse the membrane as a helical segment. Residues Lys38 to Lys187 are Extracellular-facing. Catalysis depends on residues Ser46 and Lys88.

This sequence belongs to the peptidase S26 family.

The protein localises to the cell membrane. It catalyses the reaction Cleavage of hydrophobic, N-terminal signal or leader sequences from secreted and periplasmic proteins.. The sequence is that of Signal peptidase I U (sipU) from Bacillus subtilis (strain 168).